A 204-amino-acid polypeptide reads, in one-letter code: ATP phosphoribosyltransferase (204 aa).

The protein belongs to the ATP phosphoribosyltransferase family. Short subfamily. Heteromultimer composed of HisG and HisZ subunits.

Its subcellular location is the cytoplasm. It catalyses the reaction 1-(5-phospho-beta-D-ribosyl)-ATP + diphosphate = 5-phospho-alpha-D-ribose 1-diphosphate + ATP. It functions in the pathway amino-acid biosynthesis; L-histidine biosynthesis; L-histidine from 5-phospho-alpha-D-ribose 1-diphosphate: step 1/9. In terms of biological role, catalyzes the condensation of ATP and 5-phosphoribose 1-diphosphate to form N'-(5'-phosphoribosyl)-ATP (PR-ATP). Has a crucial role in the pathway because the rate of histidine biosynthesis seems to be controlled primarily by regulation of HisG enzymatic activity. This Campylobacter concisus (strain 13826) protein is ATP phosphoribosyltransferase.